Here is a 572-residue protein sequence, read N- to C-terminus: Urease subunit alpha (572 aa).

The 437-residue stretch at 136-572 folds into the Urease domain; that stretch reads GGIDTHIHFI…VPLGQRYFLF (437 aa). Ni(2+)-binding residues include H141, H143, and K224. K224 is modified (N6-carboxylysine). Substrate is bound at residue H226. H253 and H279 together coordinate Ni(2+). H327 serves as the catalytic Proton donor. Residue D367 participates in Ni(2+) binding.

The protein belongs to the metallo-dependent hydrolases superfamily. Urease alpha subunit family. Heterotrimer of UreA (gamma), UreB (beta) and UreC (alpha) subunits. Three heterotrimers associate to form the active enzyme. The cofactor is Ni cation. Post-translationally, carboxylation allows a single lysine to coordinate two nickel ions.

Its subcellular location is the cytoplasm. It catalyses the reaction urea + 2 H2O + H(+) = hydrogencarbonate + 2 NH4(+). Its pathway is nitrogen metabolism; urea degradation; CO(2) and NH(3) from urea (urease route): step 1/1. This Haemophilus influenzae (strain 86-028NP) protein is Urease subunit alpha.